Here is a 527-residue protein sequence, read N- to C-terminus: Bifunctional purine biosynthesis protein PurH (527 aa).

Residues 1–149 form the MGS-like domain; the sequence is MASDFLPVRR…KNFARVAVAA (149 aa).

The protein belongs to the PurH family.

It carries out the reaction (6R)-10-formyltetrahydrofolate + 5-amino-1-(5-phospho-beta-D-ribosyl)imidazole-4-carboxamide = 5-formamido-1-(5-phospho-D-ribosyl)imidazole-4-carboxamide + (6S)-5,6,7,8-tetrahydrofolate. It catalyses the reaction IMP + H2O = 5-formamido-1-(5-phospho-D-ribosyl)imidazole-4-carboxamide. The protein operates within purine metabolism; IMP biosynthesis via de novo pathway; 5-formamido-1-(5-phospho-D-ribosyl)imidazole-4-carboxamide from 5-amino-1-(5-phospho-D-ribosyl)imidazole-4-carboxamide (10-formyl THF route): step 1/1. It functions in the pathway purine metabolism; IMP biosynthesis via de novo pathway; IMP from 5-formamido-1-(5-phospho-D-ribosyl)imidazole-4-carboxamide: step 1/1. The protein is Bifunctional purine biosynthesis protein PurH of Xanthomonas axonopodis pv. citri (strain 306).